Here is a 333-residue protein sequence, read N- to C-terminus: tRNA N6-adenosine threonylcarbamoyltransferase (333 aa).

The Fe cation site is built by H118 and H122. Substrate-binding positions include 140-144, D173, G186, and N274; that span reads VVSGG. D298 contacts Fe cation.

The protein belongs to the KAE1 / TsaD family. Fe(2+) serves as cofactor.

The protein resides in the cytoplasm. The catalysed reaction is L-threonylcarbamoyladenylate + adenosine(37) in tRNA = N(6)-L-threonylcarbamoyladenosine(37) in tRNA + AMP + H(+). Functionally, required for the formation of a threonylcarbamoyl group on adenosine at position 37 (t(6)A37) in tRNAs that read codons beginning with adenine. Is involved in the transfer of the threonylcarbamoyl moiety of threonylcarbamoyl-AMP (TC-AMP) to the N6 group of A37, together with TsaE and TsaB. TsaD likely plays a direct catalytic role in this reaction. The sequence is that of tRNA N6-adenosine threonylcarbamoyltransferase from Deinococcus geothermalis (strain DSM 11300 / CIP 105573 / AG-3a).